The primary structure comprises 87 residues: Small ribosomal subunit protein bS16 (87 aa).

It belongs to the bacterial ribosomal protein bS16 family.

The sequence is that of Small ribosomal subunit protein bS16 from Fusobacterium nucleatum subsp. nucleatum (strain ATCC 25586 / DSM 15643 / BCRC 10681 / CIP 101130 / JCM 8532 / KCTC 2640 / LMG 13131 / VPI 4355).